The sequence spans 109 residues: Spermidine export protein MdtI (109 aa).

4 consecutive transmembrane segments (helical) span residues 6–26 (FYHI…NILL), 35–55 (VWLG…LAQA), 64–84 (AYAL…WILF), and 88–108 (LNYK…MIKL).

It belongs to the drug/metabolite transporter (DMT) superfamily. Small multidrug resistance (SMR) (TC 2.A.7.1) family. MdtI subfamily. In terms of assembly, forms a complex with MdtJ.

The protein resides in the cell inner membrane. In terms of biological role, catalyzes the excretion of spermidine. In Yersinia enterocolitica serotype O:8 / biotype 1B (strain NCTC 13174 / 8081), this protein is Spermidine export protein MdtI.